The following is an 808-amino-acid chain: Receptor like protein 27 (808 aa).

An N-terminal signal peptide occupies residues 1 to 31 (MLFFIKVFMKTILSVLLLFFIFASSFTLVVG). At 32-740 (LAGCRPDQIQ…DEDEEVLNWK (709 aa)) the chain is on the extracellular side. Asparagine 56, asparagine 68, asparagine 90, asparagine 103, asparagine 108, asparagine 144, and asparagine 167 each carry an N-linked (GlcNAc...) asparagine glycan. 12 LRR repeats span residues 96–120 (LQHL…GFGN), 122–144 (NRLE…SFSN), 145–170 (LSQL…NLTK), 172–192 (SILV…LLTL), 193–218 (PFLS…STSS), 220–241 (LEFM…ISKL), 242–265 (INLK…LFSS), 266–291 (FKSL…SKIP), 293–314 (NLEN…LKNL), 315–338 (TKLE…FWNL), 340–363 (RLRR…VLVN), and 364–387 (SSVR…PLSI). A glycan (N-linked (GlcNAc...) asparagine) is linked at asparagine 213. Residue asparagine 313 is glycosylated (N-linked (GlcNAc...) asparagine). A glycan (N-linked (GlcNAc...) asparagine) is linked at asparagine 363. One copy of the LRR 13; degenerate repeat lies at 388 to 407 (NLLSAWNNSFTGNIPLETCN). Asparagine 394, asparagine 407, and asparagine 420 each carry an N-linked (GlcNAc...) asparagine glycan. 10 LRR repeats span residues 408–434 (RSSL…DFQE), 436–456 (LIVV…IFSD), 457–481 (GALL…LLNC), 483–504 (MLRF…WLKA), 505–529 (LPDL…DRGP), 532–556 (FPKL…YFVN), 601–625 (LTSY…IGLL), 626–649 (KALI…LANV), 650–673 (TELE…LKTL), and 675–698 (FLAY…QITG). An N-linked (GlcNAc...) asparagine glycan is attached at asparagine 480. An N-linked (GlcNAc...) asparagine glycan is attached at asparagine 544. 2 N-linked (GlcNAc...) asparagine glycosylation sites follow: asparagine 632 and asparagine 648. Residues 741–761 (AVVIGYWPGLLLGLIMAHVIA) traverse the membrane as a helical segment. The Cytoplasmic portion of the chain corresponds to 762-808 (SFKPKWLVKIVGPEKRKEDNPVRLFMTLDSRWDSFNNKKNVEQKSDM).

This sequence belongs to the RLP family.

It localises to the cell membrane. This chain is Receptor like protein 27, found in Arabidopsis thaliana (Mouse-ear cress).